The chain runs to 482 residues: NAD(+) hydrolase ThsA (482 aa).

The Deacetylase sirtuin-type domain occupies 3 to 281 (EHEQKIMIDR…EEITKRFRCK (279 aa)). Residues aspartate 112 and histidine 150 each coordinate NAD(+). Histidine 150 acts as the Proton acceptor in catalysis. The tract at residues 282-482 (NVFLSGSAHE…SKIHDVIKLI (201 aa)) is SLOG (STALD) domain. 3'cADPR contacts are provided by glycine 287, serine 288, leucine 324, phenylalanine 355, arginine 373, lysine 390, glycine 407, and glutamate 411.

Belongs to the soluble Thoeris ThsA family. As to quaternary structure, homotetramer in solution.

It catalyses the reaction NAD(+) + H2O = ADP-D-ribose + nicotinamide + H(+). In vivo probably activated by a cyclic ADP-D-ribose generated by ThsB (might be 3'cADPR). Its function is as follows. NAD(+) hydrolyzing component (NADase) of the Thoeris antiviral defense system, composed of ThsA and ThsB (maybe J591_1492). As purified, has NADase activity that is not activated by any tested cADPR isomers; binds 3'cADPR better than 2'cADPR. It was suggested the purified protein is already in a fully active state. Upon activation binds and hydrolyzes NAD(+), leading to cell death and inhibition of phage replication. The chain is NAD(+) hydrolase ThsA from Acinetobacter baumannii (strain 532279).